The chain runs to 317 residues: MISMLAGNGSSVTEFVLAGLTDRPELQLPLFYLFLIIYIITVVGNLGLIILIGLNPHLHTPMYYFLFNLSFIDLCYSSVFSPKMLINFVSEKNSISYAGCMTQLFLFLFFVISECYMLTSMAYDRYVAICNPLLYKVTMSPQICSVISFAAYGMGFAGSSAHTGCMLRLTFCNVNVINHYLCDILPLLQLSCTSTYVNEVVVLIVVGINITVPSFTILISYVFILANILNIKSTQGRAKAFSTCSSHIMAISLFFGSAAFMYLKYSSGSMEQGKISSVFYTNVGPMLNPLIYSLRNKDVKVALRKSLIKFREKTDFN.

Over 1–32 (MISMLAGNGSSVTEFVLAGLTDRPELQLPLFY) the chain is Extracellular. A glycan (N-linked (GlcNAc...) asparagine) is linked at N8. Residues 33–53 (LFLIIYIITVVGNLGLIILIG) traverse the membrane as a helical segment. The Cytoplasmic segment spans residues 54-59 (LNPHLH). The chain crosses the membrane as a helical span at residues 60–80 (TPMYYFLFNLSFIDLCYSSVF). The Extracellular segment spans residues 81–97 (SPKMLINFVSEKNSISY). A helical membrane pass occupies residues 98–118 (AGCMTQLFLFLFFVISECYML). The Cytoplasmic portion of the chain corresponds to 119–136 (TSMAYDRYVAICNPLLYK). Residues 137–157 (VTMSPQICSVISFAAYGMGFA) traverse the membrane as a helical segment. Residues 158-199 (GSSAHTGCMLRLTFCNVNVINHYLCDILPLLQLSCTSTYVNE) lie on the Extracellular side of the membrane. A helical transmembrane segment spans residues 200–220 (VVVLIVVGINITVPSFTILIS). The Cytoplasmic segment spans residues 221–242 (YVFILANILNIKSTQGRAKAFS). Residues 243-263 (TCSSHIMAISLFFGSAAFMYL) form a helical membrane-spanning segment. At 264–274 (KYSSGSMEQGK) the chain is on the extracellular side. A helical membrane pass occupies residues 275–294 (ISSVFYTNVGPMLNPLIYSL). Residues 295–317 (RNKDVKVALRKSLIKFREKTDFN) lie on the Cytoplasmic side of the membrane.

The protein belongs to the G-protein coupled receptor 1 family.

The protein localises to the cell membrane. In terms of biological role, odorant receptor. The protein is Olfactory receptor 8B3 of Mus musculus (Mouse).